Reading from the N-terminus, the 243-residue chain is Ribonuclease PH (243 aa).

Phosphate-binding positions include arginine 84 and 122-124; that span reads GTR.

It belongs to the RNase PH family. Homohexameric ring arranged as a trimer of dimers.

The enzyme catalyses tRNA(n+1) + phosphate = tRNA(n) + a ribonucleoside 5'-diphosphate. Its function is as follows. Phosphorolytic 3'-5' exoribonuclease that plays an important role in tRNA 3'-end maturation. Removes nucleotide residues following the 3'-CCA terminus of tRNAs; can also add nucleotides to the ends of RNA molecules by using nucleoside diphosphates as substrates, but this may not be physiologically important. Probably plays a role in initiation of 16S rRNA degradation (leading to ribosome degradation) during starvation. The chain is Ribonuclease PH from Bdellovibrio bacteriovorus (strain ATCC 15356 / DSM 50701 / NCIMB 9529 / HD100).